The following is a 285-amino-acid chain: Urease accessory protein UreD (285 aa).

The protein belongs to the UreD family. As to quaternary structure, ureD, UreF and UreG form a complex that acts as a GTP-hydrolysis-dependent molecular chaperone, activating the urease apoprotein by helping to assemble the nickel containing metallocenter of UreC. The UreE protein probably delivers the nickel.

It is found in the cytoplasm. In terms of biological role, required for maturation of urease via the functional incorporation of the urease nickel metallocenter. The sequence is that of Urease accessory protein UreD from Cenarchaeum symbiosum (strain A).